Reading from the N-terminus, the 180-residue chain is Inner membrane assembly complex subunit 17 (180 aa).

Residues 1 to 36 (MMIRNQLYRKCIIGGGRSILNGWVINGTVPNIGLRY) constitute a mitochondrion transit peptide. At 37–105 (LRSGIVTRSN…RKTQDIPIKR (69 aa)) the chain is on the mitochondrial matrix side. The chain crosses the membrane as a helical span at residues 106-128 (FIRPTWMFLLMSSTFYLLGHYIW). Positions 129 to 163 (WKLEYDEVEKELDRQVTALEEELHNLIEEHRVHGE) form a coiled coil. Residues 129–180 (WKLEYDEVEKELDRQVTALEEELHNLIEEHRVHGENEAIKNKKHKHWYKFWS) are Mitochondrial intermembrane-facing.

Belongs to the INA17 family. In terms of assembly, component of the inner membrane assembly (INA) complex, composed of INA17 and INA22. Interacts with a subset of F(1)F(0)-ATP synthase subunits of the F(1)-domain and the peripheral stalk.

The protein resides in the mitochondrion inner membrane. Its function is as follows. Component of the INA complex (INAC) that promotes the biogenesis of mitochondrial F(1)F(0)-ATP synthase. INAC facilitates the assembly of the peripheral stalk and promotes the assembly of the catalytic F(1)-domain with the membrane-embedded F(0)-domain. The polypeptide is Inner membrane assembly complex subunit 17 (Vanderwaltozyma polyspora (strain ATCC 22028 / DSM 70294 / BCRC 21397 / CBS 2163 / NBRC 10782 / NRRL Y-8283 / UCD 57-17) (Kluyveromyces polysporus)).